The chain runs to 430 residues: Adenylosuccinate synthetase (430 aa).

Residues 12–18 and 40–42 each bind GTP; these read GDEGKGK and GHT. Asp13 (proton acceptor) is an active-site residue. 2 residues coordinate Mg(2+): Asp13 and Gly40. IMP contacts are provided by residues 13 to 16, 38 to 41, Thr128, Arg142, Gln223, Thr238, and Arg302; these read DEGK and NAGH. His41 acts as the Proton donor in catalysis. Residue 298–304 participates in substrate binding; sequence TTTGRPR. GTP is bound by residues Arg304, 330–332, and 412–414; these read LLD and SVG.

It belongs to the adenylosuccinate synthetase family. In terms of assembly, homodimer. Requires Mg(2+) as cofactor.

It localises to the cytoplasm. The enzyme catalyses IMP + L-aspartate + GTP = N(6)-(1,2-dicarboxyethyl)-AMP + GDP + phosphate + 2 H(+). It participates in purine metabolism; AMP biosynthesis via de novo pathway; AMP from IMP: step 1/2. Functionally, plays an important role in the de novo pathway of purine nucleotide biosynthesis. Catalyzes the first committed step in the biosynthesis of AMP from IMP. The protein is Adenylosuccinate synthetase of Listeria welshimeri serovar 6b (strain ATCC 35897 / DSM 20650 / CCUG 15529 / CIP 8149 / NCTC 11857 / SLCC 5334 / V8).